The sequence spans 47 residues: Large ribosomal subunit protein eL40 (47 aa).

The protein belongs to the eukaryotic ribosomal protein eL40 family.

The protein is Large ribosomal subunit protein eL40 of Methanococcus vannielii (strain ATCC 35089 / DSM 1224 / JCM 13029 / OCM 148 / SB).